The chain runs to 296 residues: 4-diphosphocytidyl-2-C-methyl-D-erythritol kinase (296 aa).

Lys22 is a catalytic residue. Position 105–115 (105–115) interacts with ATP; sequence PMGGGLGGGSS. The active site involves Asp147.

It belongs to the GHMP kinase family. IspE subfamily.

The enzyme catalyses 4-CDP-2-C-methyl-D-erythritol + ATP = 4-CDP-2-C-methyl-D-erythritol 2-phosphate + ADP + H(+). The protein operates within isoprenoid biosynthesis; isopentenyl diphosphate biosynthesis via DXP pathway; isopentenyl diphosphate from 1-deoxy-D-xylulose 5-phosphate: step 3/6. Its function is as follows. Catalyzes the phosphorylation of the position 2 hydroxy group of 4-diphosphocytidyl-2C-methyl-D-erythritol. The chain is 4-diphosphocytidyl-2-C-methyl-D-erythritol kinase from Photobacterium profundum (strain SS9).